We begin with the raw amino-acid sequence, 48 residues long: Delta-stichotoxin-Hcr1b (48 aa).

Cystine bridges form between Cys3–Cys43, Cys5–Cys33, and Cys26–Cys44.

The protein belongs to the sea anemone sodium channel inhibitory toxin family. Type II subfamily.

The protein localises to the secreted. It is found in the nematocyst. Binds to site 3 of voltage-gated sodium channels and inhibits the inactivation process. The sequence is that of Delta-stichotoxin-Hcr1b from Radianthus crispa (Leathery sea anemone).